A 298-amino-acid polypeptide reads, in one-letter code: uncharacterized protein (298 aa).

The protein belongs to the NAD(P)-dependent epimerase/dehydratase family.

This is an uncharacterized protein from Saccharomyces cerevisiae (strain ATCC 204508 / S288c) (Baker's yeast).